We begin with the raw amino-acid sequence, 313 residues long: MSDSINTEPSTDTQTNGERTVETTSPSAETTAGESEEQVRDEWRHYEFDGDTKLSVENLDVWYGDDHALKDVSMEIPENSVTALIGPSGCGKSTYLRCLNRMNDRIKAARIDGSVELEGTEIYDPNANLVELRKRIGMVFQSPNPFPKSIRENISYGPRKHGDINKGLLARLFGRDDTEQEGELVERSLKQAALWEEVSDRLDDNALGLSGGQQQRLCIARCLAVDPEVILMDEPASALDPIATSKIEDLVEELSKDYTVVIVTHNMQQAARISDQTAVFLTGGELVEYDDTDKIFENPESQRVEDYITGKFG.

The segment covering 1 to 33 has biased composition (polar residues); that stretch reads MSDSINTEPSTDTQTNGERTVETTSPSAETTAG. The tract at residues 1-40 is disordered; the sequence is MSDSINTEPSTDTQTNGERTVETTSPSAETTAGESEEQVR. In terms of domain architecture, ABC transporter spans 54–308; the sequence is LSVENLDVWY…PESQRVEDYI (255 aa). 86 to 93 is a binding site for ATP; it reads GPSGCGKS.

It belongs to the ABC transporter superfamily. Phosphate importer (TC 3.A.1.7) family. In terms of assembly, the complex is composed of two ATP-binding proteins (PstB), two transmembrane proteins (PstC and PstA) and a solute-binding protein (PstS).

The protein resides in the cell membrane. It carries out the reaction phosphate(out) + ATP + H2O = ADP + 2 phosphate(in) + H(+). Functionally, part of the ABC transporter complex PstSACB involved in phosphate import. Responsible for energy coupling to the transport system. This chain is Phosphate import ATP-binding protein PstB 2, found in Haloarcula marismortui (strain ATCC 43049 / DSM 3752 / JCM 8966 / VKM B-1809) (Halobacterium marismortui).